The following is a 487-amino-acid chain: Glutamyl-tRNA(Gln) amidotransferase subunit A (487 aa).

Catalysis depends on charge relay system residues Lys-79 and Ser-158. Ser-182 serves as the catalytic Acyl-ester intermediate.

It belongs to the amidase family. GatA subfamily. Heterotrimer of A, B and C subunits.

It carries out the reaction L-glutamyl-tRNA(Gln) + L-glutamine + ATP + H2O = L-glutaminyl-tRNA(Gln) + L-glutamate + ADP + phosphate + H(+). Allows the formation of correctly charged Gln-tRNA(Gln) through the transamidation of misacylated Glu-tRNA(Gln) in organisms which lack glutaminyl-tRNA synthetase. The reaction takes place in the presence of glutamine and ATP through an activated gamma-phospho-Glu-tRNA(Gln). This is Glutamyl-tRNA(Gln) amidotransferase subunit A from Ehrlichia canis (strain Jake).